Here is a 249-residue protein sequence, read N- to C-terminus: tRNA pseudouridine synthase A (249 aa).

Aspartate 52 acts as the Nucleophile in catalysis. A substrate-binding site is contributed by tyrosine 111.

Belongs to the tRNA pseudouridine synthase TruA family. As to quaternary structure, homodimer.

The catalysed reaction is uridine(38/39/40) in tRNA = pseudouridine(38/39/40) in tRNA. Its function is as follows. Formation of pseudouridine at positions 38, 39 and 40 in the anticodon stem and loop of transfer RNAs. The protein is tRNA pseudouridine synthase A of Caulobacter sp. (strain K31).